Consider the following 550-residue polypeptide: Cell pattern formation-associated protein STUA (550 aa).

One can recognise an HTH APSES-type domain in the interval 86-192 (RVTATLWEDE…HNIGALLYHP (107 aa)). The segment at residues 120 to 141 (GTKLLNVAGMTRGRRDGILKSE) is a DNA-binding region (H-T-H motif). A compositionally biased stretch (polar residues) spans 246–266 (SLANGPQSLASTPQPLTNGSQ). 4 disordered regions span residues 246 to 277 (SLANGPQSLASTPQPLTNGSQPPMPNGGGMLK), 371 to 412 (HHQP…VKRR), 447 to 467 (KRRDDEAETPRPGPNVHDHLN), and 527 to 550 (APVYDTGARPPSAISAPRRQQSFG). The segment covering 385–395 (RGRDEDDDVHR) has biased composition (basic and acidic residues). The tract at residues 517–546 (TVAASPSYPSAPVYDTGARPPSAISAPRRQ) is nuclear localization domain.

It belongs to the EFG1/PHD1/stuA family.

Its subcellular location is the nucleus. Its function is as follows. Transcription factor that regulates asexual reproduction. Binds the StuA-response elements (StRE) with the consensus sequence 5'-(A/T)CGCG(T/A)N(A/C)-3' at the promoters of target genes. Differentially regulates the development of macroconidia, microconidia, and chlamydospores. Acts as a positive regulator for the development of macroconidia and as a negative regulator for the development of chlamydospores. Involved in microconidium formation specifically in infected plants. This chain is Cell pattern formation-associated protein STUA, found in Fusarium oxysporum (Fusarium vascular wilt).